The chain runs to 446 residues: C-type lectin domain family 18 member C (446 aa).

The signal sequence occupies residues 1–26 (MLHPETSPGRGHLLAVLLALLGTAWA). In terms of domain architecture, SCP spans 52 to 182 (LSLHNRLRSW…AAIEAFVCAY (131 aa)). An N-linked (GlcNAc...) asparagine glycan is attached at asparagine 144. The region spanning 228–261 (PRNPCRMSCQNHGRLNISTCHCHCPPGYTGRYCQ) is the EGF-like domain. Cystine bridges form between cysteine 236–cysteine 249, cysteine 251–cysteine 260, cysteine 327–cysteine 432, and cysteine 408–cysteine 424. The C-type lectin domain maps to 306-433 (IDGDCFMVSS…CKTRNRYICQ (128 aa)).

As to expression, detected in peripheral blood cells.

Its subcellular location is the secreted. The protein resides in the endoplasmic reticulum. The protein localises to the golgi apparatus. It localises to the endosome. Functionally, binds polysaccharidesin a Ca(2+)-independent manner with a preferentially binding to fucoidan, beta-glucans and galactans. This chain is C-type lectin domain family 18 member C (CLEC18C), found in Homo sapiens (Human).